We begin with the raw amino-acid sequence, 431 residues long: Putative serine/threonine-protein kinase B (431 aa).

The Protein kinase domain occupies 20–279 (YLNKGIVGLG…VRENFQIPYI (260 aa)). ATP-binding positions include 26–34 (VGLGSYGEG) and Lys-49. Asp-147 serves as the catalytic Proton acceptor. Residues 331–429 (DVTHRGHVNK…WVHAIQRGIG (99 aa)) enclose the PH domain.

The protein belongs to the protein kinase superfamily. Ser/Thr protein kinase family.

The enzyme catalyses L-seryl-[protein] + ATP = O-phospho-L-seryl-[protein] + ADP + H(+). The catalysed reaction is L-threonyl-[protein] + ATP = O-phospho-L-threonyl-[protein] + ADP + H(+). The sequence is that of Putative serine/threonine-protein kinase B (NRKB) from Trypanosoma brucei brucei.